Here is a 161-residue protein sequence, read N- to C-terminus: Transcription elongation factor GreA (161 aa).

Positions 46-71 (AEYTAAKEKQSFLHGKLQELENNLAL) form a coiled coil.

The protein belongs to the GreA/GreB family.

Its function is as follows. Necessary for efficient RNA polymerase transcription elongation past template-encoded arresting sites. The arresting sites in DNA have the property of trapping a certain fraction of elongating RNA polymerases that pass through, resulting in locked ternary complexes. Cleavage of the nascent transcript by cleavage factors such as GreA or GreB allows the resumption of elongation from the new 3'terminus. GreA releases sequences of 2 to 3 nucleotides. The sequence is that of Transcription elongation factor GreA from Syntrophus aciditrophicus (strain SB).